We begin with the raw amino-acid sequence, 48 residues long: Delta-ctenitoxin-Pn1b (48 aa).

5 disulfides stabilise this stretch: Cys-1–Cys-15, Cys-8–Cys-21, Cys-12–Cys-48, Cys-14–Cys-31, and Cys-23–Cys-29.

It belongs to the neurotoxin 03 (Tx2) family. 05 subfamily. As to expression, expressed by the venom gland.

It localises to the secreted. Its function is as follows. Insecticidal neurotoxin that reversibly inhibits the N-methyl-D-aspartate (NMDA)-subtype of ionotropic glutamate receptor (GRIN) and inhibits inactivation of insect sodium channels (Nav). Inhibits glutamate uptake in rat brain synaptosomes. In vivo, induces immediate excitatory effects when injected intrathoracically in houseflies and cockroaches. This is Delta-ctenitoxin-Pn1b from Phoneutria nigriventer (Brazilian armed spider).